The following is a 273-amino-acid chain: Pantothenate synthetase (273 aa).

ATP is bound at residue 27–34; the sequence is MGALHNGH. His34 functions as the Proton donor in the catalytic mechanism. Gln58 contacts (R)-pantoate. Gln58 contacts beta-alanine. 144–147 is a binding site for ATP; it reads GKKD. Gln150 is a binding site for (R)-pantoate. Residues Val173 and 181 to 184 contribute to the ATP site; that span reads LSSR.

Belongs to the pantothenate synthetase family. As to quaternary structure, homodimer.

The protein localises to the cytoplasm. It carries out the reaction (R)-pantoate + beta-alanine + ATP = (R)-pantothenate + AMP + diphosphate + H(+). Its pathway is cofactor biosynthesis; (R)-pantothenate biosynthesis; (R)-pantothenate from (R)-pantoate and beta-alanine: step 1/1. In terms of biological role, catalyzes the condensation of pantoate with beta-alanine in an ATP-dependent reaction via a pantoyl-adenylate intermediate. In Campylobacter fetus subsp. fetus (strain 82-40), this protein is Pantothenate synthetase.